A 392-amino-acid chain; its full sequence is uncharacterized protein (392 aa).

A signal peptide spans 1–23; it reads MWTALVLVWISSVLLPRSHMMSA. Over 24-342 the chain is Extracellular; the sequence is EPRNIVTNKW…DALTPSLVNK (319 aa). The N-linked (GlcNAc...) asparagine glycan is linked to Asn77. Disordered regions lie at residues 83–154 and 167–320; these read AEVT…PRTA and AAGT…TDSC. The span at 86-97 shows a compositional bias: low complexity; it reads TTHGTNTSTPTT. Polar residues-rich tracts occupy residues 107–127 and 170–249; these read SRTL…TRPT and TVNT…SAST. An N-linked (GlcNAc...) asparagine glycan is attached at Asn172. Composition is skewed to low complexity over residues 265 to 277 and 284 to 309; these read SPTT…LPTQ and TLLT…SRSS. A helical transmembrane segment spans residues 343 to 363; that stretch reads MLLLVVLLVGVTLFIAVLVMF. Over 364–392 the chain is Cytoplasmic; sequence ALQAYESYKKKDYTQVDYLINGMYADSEM.

The protein resides in the cell membrane. Its subcellular location is the golgi apparatus. It is found in the trans-Golgi network membrane. This is an uncharacterized protein from Mus musculus (Mouse).